Reading from the N-terminus, the 149-residue chain is Limonene-1,2-epoxide hydrolase (149 aa).

D101 serves as the catalytic Proton donor. Catalysis depends on D132, which acts as the Proton acceptor.

It belongs to the limonene-1,2-epoxide hydrolase family. As to quaternary structure, monomer.

The enzyme catalyses limonene 1,2-epoxide + H2O = limonene-1,2-diol. It functions in the pathway terpene metabolism; (4R)-limonene degradation; (1S,4R)-1-hydroxylimonen-2-one from (4R)-limonene: step 2/3. Catalyzes the conversion of limonene-1,2-epoxide to limonene-1,2-diol. Can use both the (-) and (+) isomers of limonene-1,2-epoxide as substrates and also has some activity with 1-methylcyclohexene oxide, cyclohexene oxide and indene oxide as substrates. In Rhodococcus erythropolis (Arthrobacter picolinophilus), this protein is Limonene-1,2-epoxide hydrolase (limA).